We begin with the raw amino-acid sequence, 82 residues long: U1-theraphotoxin-Ct1b (82 aa).

The N-terminal stretch at 1 to 23 (MRTFTLIAILTCALLVIYHAAEA) is a signal peptide. Positions 24–44 (EELEAKDVIESKALATLDEER) are excised as a propeptide.

This sequence belongs to the neurotoxin 12 (Hwtx-2) family. 03 (juruin) subfamily. In terms of processing, contains 3 disulfide bonds. Two different connectivities are observed in similar proteins (C1-C3, C2-C5, C4-C6 or C1-C4, C2-C5, C3-C6). Expressed by the venom gland.

The protein resides in the secreted. In terms of biological role, this toxin causes paralysis and death to sheep blowflies. It does not target insect sodium channels. The chain is U1-theraphotoxin-Ct1b from Coremiocnemis tropix (Australian tarantula spider).